The primary structure comprises 1002 residues: UPF0182 protein Mvan_1814 (1002 aa).

Helical transmembrane passes span 16-36, 61-81, 112-132, 174-194, 209-229, 258-278, and 286-306; these read VMIA…RLVD, LLLF…AMAL, LVGI…AQNY, FAAT…FGGI, IQLI…YWLD, KLIL…AIVL, and IGVV…PLVV. The tract at residues 891–958 is disordered; sequence LFGPGADATA…TGPTQLSAGK (68 aa). Residues 893-923 show a composition bias toward low complexity; the sequence is GPGADATATGPAATEPPAGQAPQPQGNNQPP. Positions 937-950 are enriched in pro residues; the sequence is PQQPEVPVAVPPTG.

Belongs to the UPF0182 family.

Its subcellular location is the cell membrane. The sequence is that of UPF0182 protein Mvan_1814 from Mycolicibacterium vanbaalenii (strain DSM 7251 / JCM 13017 / BCRC 16820 / KCTC 9966 / NRRL B-24157 / PYR-1) (Mycobacterium vanbaalenii).